The chain runs to 263 residues: Uroplakin-3b-like protein 1 (263 aa).

The N-terminal stretch at methionine 1 to proline 33 is a signal peptide. The Extracellular portion of the chain corresponds to glycine 34–valine 204. N-linked (GlcNAc...) asparagine glycosylation is found at asparagine 51, asparagine 76, and asparagine 91. A helical membrane pass occupies residues isoleucine 205–isoleucine 225. Residues tyrosine 226–serine 263 are Cytoplasmic-facing.

This sequence belongs to the uroplakin-3 family.

It localises to the membrane. This chain is Uroplakin-3b-like protein 1, found in Homo sapiens (Human).